The following is a 639-amino-acid chain: UvrABC system protein C (639 aa).

In terms of domain architecture, GIY-YIG spans 20-97 (ERSGVYRMFD…IKKFQPKFNI (78 aa)). Residues 207 to 242 (KELQENLSRKMEELSSQMRFEEAAEIRDRIKALSYV) enclose the UVR domain.

The protein belongs to the UvrC family. Interacts with UvrB in an incision complex.

The protein resides in the cytoplasm. Its function is as follows. The UvrABC repair system catalyzes the recognition and processing of DNA lesions. UvrC both incises the 5' and 3' sides of the lesion. The N-terminal half is responsible for the 3' incision and the C-terminal half is responsible for the 5' incision. This is UvrABC system protein C from Rickettsia africae (strain ESF-5).